The following is a 200-amino-acid chain: Holliday junction branch migration complex subunit RuvA (200 aa).

The tract at residues 1–64 is domain I; sequence MIGHLRGIIV…EDAHTLYGFH (64 aa). The interval 65-143 is domain II; it reads NDHERRLFRA…RWHTNDTPSP (79 aa). Positions 144–148 are flexible linker; it reads EGLRS. The tract at residues 149–200 is domain III; that stretch reads SNTQPTQDAISALMALGYKPQEAKRAIDAIQKPDLSAETLIRLALKQMVLGT.

It belongs to the RuvA family. As to quaternary structure, homotetramer. Forms an RuvA(8)-RuvB(12)-Holliday junction (HJ) complex. HJ DNA is sandwiched between 2 RuvA tetramers; dsDNA enters through RuvA and exits via RuvB. An RuvB hexamer assembles on each DNA strand where it exits the tetramer. Each RuvB hexamer is contacted by two RuvA subunits (via domain III) on 2 adjacent RuvB subunits; this complex drives branch migration. In the full resolvosome a probable DNA-RuvA(4)-RuvB(12)-RuvC(2) complex forms which resolves the HJ.

It localises to the cytoplasm. Its function is as follows. The RuvA-RuvB-RuvC complex processes Holliday junction (HJ) DNA during genetic recombination and DNA repair, while the RuvA-RuvB complex plays an important role in the rescue of blocked DNA replication forks via replication fork reversal (RFR). RuvA specifically binds to HJ cruciform DNA, conferring on it an open structure. The RuvB hexamer acts as an ATP-dependent pump, pulling dsDNA into and through the RuvAB complex. HJ branch migration allows RuvC to scan DNA until it finds its consensus sequence, where it cleaves and resolves the cruciform DNA. The sequence is that of Holliday junction branch migration complex subunit RuvA from Coxiella burnetii (strain CbuG_Q212) (Coxiella burnetii (strain Q212)).